A 179-amino-acid polypeptide reads, in one-letter code: Ribosome maturation factor RimM (179 aa).

Positions 95–174 (KDEFFYFDIL…QIFCTQDAFL (80 aa)) constitute a PRC barrel domain.

The protein belongs to the RimM family. As to quaternary structure, binds ribosomal protein uS19.

It localises to the cytoplasm. An accessory protein needed during the final step in the assembly of 30S ribosomal subunit, possibly for assembly of the head region. Essential for efficient processing of 16S rRNA. May be needed both before and after RbfA during the maturation of 16S rRNA. It has affinity for free ribosomal 30S subunits but not for 70S ribosomes. The polypeptide is Ribosome maturation factor RimM (Campylobacter jejuni subsp. jejuni serotype O:2 (strain ATCC 700819 / NCTC 11168)).